The primary structure comprises 200 residues: Dephospho-CoA kinase (200 aa).

One can recognise a DPCK domain in the interval valine 3–arginine 200. Glycine 11 to threonine 16 contributes to the ATP binding site.

It belongs to the CoaE family.

It localises to the cytoplasm. The enzyme catalyses 3'-dephospho-CoA + ATP = ADP + CoA + H(+). Its pathway is cofactor biosynthesis; coenzyme A biosynthesis; CoA from (R)-pantothenate: step 5/5. In terms of biological role, catalyzes the phosphorylation of the 3'-hydroxyl group of dephosphocoenzyme A to form coenzyme A. This Brucella abortus (strain 2308) protein is Dephospho-CoA kinase.